Here is a 317-residue protein sequence, read N- to C-terminus: Protein translocase subunit SecF (317 aa).

The next 6 membrane-spanning stretches (helical) occupy residues 11–31 (FYLL…LFGL), 135–155 (RSIV…AFAF), 166–186 (ICAI…FAIL), 197–217 (LFVT…IVVF), 244–266 (LVRS…FFGG), and 276–298 (LLIG…LVSW).

The protein belongs to the SecD/SecF family. SecF subfamily. In terms of assembly, forms a complex with SecD. Part of the essential Sec protein translocation apparatus which comprises SecA, SecYEG and auxiliary proteins SecDF. Other proteins may also be involved.

It is found in the cell membrane. Its function is as follows. Part of the Sec protein translocase complex. Interacts with the SecYEG preprotein conducting channel. SecDF uses the proton motive force (PMF) to complete protein translocation after the ATP-dependent function of SecA. The polypeptide is Protein translocase subunit SecF (Thermobaculum terrenum (strain ATCC BAA-798 / CCMEE 7001 / YNP1)).